Reading from the N-terminus, the 502-residue chain is MSSEEKYIMAIDQGTTSSRAIIFNKKGEKIASSQKEFPQIFPQAGWVEHNANQIWNSVQSVIAGAFIESSIKPGQIEAIGITNQRETTVVWDKKTGLPIYNAIVWQSRQTAPIADQLKQEGHTNMIHEKTGLVIDAYFSATKVRWILDHVPGAQERAEKGELLFGTIDTWLVWKLTDGLVHVTDYSNAARTMLYNIKELKWDDEILELLNIPKAMLPEVKSNSEVYGKTTPFHFYGGEVPISGMAGDQQAALFGQLAFEPGMVKNTYGTGSFIIMNTGEEMQLSQNNLLTTIGYGINGKVHYALEGSIFIAGSAIQWLRDGLRMIETSSESEGLAQSSTSDDEVYVVPAFTGLGAPYWDSNARGSVFGLTRGTSKEDFVKATLQSIAYQVRDVIDTMQVDSGIDIQQLRVDGGAAMNNLLMQFQADILGIDIARAKNLETTALGAAFLAGLSVGYWESMDELKELNATGQLFQATMNESRKEKLYKGWRKAVKATQVFAQED.

Thr15 is an ADP binding site. Positions 15, 16, and 17 each coordinate ATP. Residue Thr15 coordinates sn-glycerol 3-phosphate. Arg19 provides a ligand contact to ADP. Positions 85, 86, and 137 each coordinate sn-glycerol 3-phosphate. Arg85, Glu86, and Tyr137 together coordinate glycerol. His233 bears the Phosphohistidine; by HPr mark. Asp247 contacts sn-glycerol 3-phosphate. Glycerol is bound by residues Asp247 and Gln248. Residues Thr269 and Gly312 each coordinate ADP. The ATP site is built by Thr269, Gly312, Gln316, and Gly413. ADP contacts are provided by Gly413 and Asn417.

This sequence belongs to the FGGY kinase family. In terms of assembly, homotetramer and homodimer (in equilibrium). Post-translationally, the phosphoenolpyruvate-dependent sugar phosphotransferase system (PTS), including enzyme I, and histidine-containing protein (HPr) are required for the phosphorylation, which leads to the activation of the enzyme.

The catalysed reaction is glycerol + ATP = sn-glycerol 3-phosphate + ADP + H(+). Its pathway is polyol metabolism; glycerol degradation via glycerol kinase pathway; sn-glycerol 3-phosphate from glycerol: step 1/1. Activated by phosphorylation and inhibited by fructose 1,6-bisphosphate (FBP). Its function is as follows. Key enzyme in the regulation of glycerol uptake and metabolism. Catalyzes the phosphorylation of glycerol to yield sn-glycerol 3-phosphate. This Streptococcus agalactiae serotype Ia (strain ATCC 27591 / A909 / CDC SS700) protein is Glycerol kinase.